A 281-amino-acid polypeptide reads, in one-letter code: Fibrinogen-like protein 1-like protein (281 aa).

A signal peptide spans 1–33 (MGLQAGTRQLHGNLILLPVAVVMLLLCTSPVCA). The Fibrinogen C-terminal domain maps to 34-246 (TASVGLPADC…RPSSWSNPPM (213 aa)). 2 disulfide bridges follow: cysteine 43–cysteine 69 and cysteine 201–cysteine 213. A compositionally biased stretch (low complexity) spans 260–269 (PSRSPSLPSP). The interval 260-281 (PSRSPSLPSPITATHTVRNQLQ) is disordered. Positions 270-281 (ITATHTVRNQLQ) are enriched in polar residues.

In terms of tissue distribution, expressed in smal intestine, colon and lung.

In terms of biological role, shows a cytidine deaminase activity on 2'-deoxycytidine (in vitro), however shows no RNA editing activity (in vitro). The polypeptide is Fibrinogen-like protein 1-like protein (Gallus gallus (Chicken)).